Here is a 382-residue protein sequence, read N- to C-terminus: Putative glutamate--cysteine ligase 2-1 (382 aa).

Belongs to the glutamate--cysteine ligase type 2 family. YbdK subfamily.

The catalysed reaction is L-cysteine + L-glutamate + ATP = gamma-L-glutamyl-L-cysteine + ADP + phosphate + H(+). Its function is as follows. ATP-dependent carboxylate-amine ligase which exhibits weak glutamate--cysteine ligase activity. In Frankia alni (strain DSM 45986 / CECT 9034 / ACN14a), this protein is Putative glutamate--cysteine ligase 2-1.